We begin with the raw amino-acid sequence, 541 residues long: Chaperonin GroEL 1 (541 aa).

Residues 29–32, 86–90, Gly-413, and Asp-492 each bind ATP; these read TLGP and DGTTT.

The protein belongs to the chaperonin (HSP60) family. Forms a cylinder of 14 subunits composed of two heptameric rings stacked back-to-back. Interacts with the co-chaperonin GroES.

Its subcellular location is the cytoplasm. The enzyme catalyses ATP + H2O + a folded polypeptide = ADP + phosphate + an unfolded polypeptide.. Its function is as follows. Together with its co-chaperonin GroES, plays an essential role in assisting protein folding. The GroEL-GroES system forms a nano-cage that allows encapsulation of the non-native substrate proteins and provides a physical environment optimized to promote and accelerate protein folding. In Rhodococcus jostii (strain RHA1), this protein is Chaperonin GroEL 1.